A 1027-amino-acid chain; its full sequence is MSLPEYAELHCLSNFSFLRGASHPEELAARALAQGYAALALTDECSLAGVVRAHLAAKKHGLKFIVGSEMMTVDGLKLVFLACNRHGYGNLSALITLARRRAEKGGYTLHRNDLESISPSGALPDCLVLWVPGNNPSSADGEWLVSRFPGRSWIAVELHAGPEDAERLAGLQSLGEVCGLPLVATGDVHMHIKARRPVQDVLTALRLKSTVFEAGYALFPNGERHLRSRLRLSRLYPPELLAETLNIAARCEFLLDELRYEYPEEIIPSGETPASWLRSETERGLQRRYPAGVPGSVRERIEHELGLIAEMAYEAYFLTVYDIVCYARSQDILCQGRGSAANSAVCYALGVTEVDPARSALLFERFVSKERGEPPDIDVDFEHERREDVIQYIYTKYGRERAALAAALITYRTKGALRDAGRALGFGIAQINALTASLAWWDKREQLPERFAELGLDPHAPRVEKWLAIAEALRGFPRHLTQHVGGFVISRGPLSRLVPVENAAMSARSVIQWDKDDLDAMGLMKVDILALGMLSAIRRMLQIVGETTGRPMKMQDIPAEDPATYEMLCHADSMGVFQVESRAQMAMLPRLRPQNFYDLVVEVALVRPGPIQGDMVHPYLKRRQGRERIEEISPAVDAVLERTYGVPIFQEQVMQLAVVAANFTPGEADQLRRAMAAWKRKGGLEPFEQKLLAGMAANDLPESFARRIIAQIQGFGEYGFPESHAASFALLVYASAWLKRHHPAAFLCGLLNSQPMGFYSPSMLIQDARRHGVRVLPPDVMTSDWDSRLDERGAVRLGLREISGFSVAAAKRITAVCRENQPFLNVADLAARAGLQRRDLDLLAAGDALQGLAGHRRQAAWAATVAVVQGDLFDGTPVVEAEIELPAPSDGENLVADYRSLGLTLRSHPLSLLRQYLAERRFVTAADLKMAGHHTLIRSVGIVVGRQRPGTATGIVFVTLEDETGLSNVVVHPQLVEKQRRELLGSTLLGVYGQLQVEGEVVHLVAKRLVDLSAWLGRLETVSRDFH.

It belongs to the DNA polymerase type-C family. DnaE2 subfamily.

The protein resides in the cytoplasm. The enzyme catalyses DNA(n) + a 2'-deoxyribonucleoside 5'-triphosphate = DNA(n+1) + diphosphate. DNA polymerase involved in damage-induced mutagenesis and translesion synthesis (TLS). It is not the major replicative DNA polymerase. This chain is Error-prone DNA polymerase, found in Dechloromonas aromatica (strain RCB).